The following is a 295-amino-acid chain: GDP-polyphosphate phosphotransferase (295 aa).

Residues 1–28 (MDIPSVDVSTATNDGASSRAKGHRSAAP) are disordered. The span at 7 to 16 (DVSTATNDGA) shows a compositional bias: polar residues. Histidine 115 and histidine 247 each carry phosphohistidine.

Belongs to the polyphosphate kinase 2 (PPK2) family. Class I subfamily. Interacts with Ndk. Post-translationally, autophosphorylated at His-115 and His-247 using polyP as a phosphate donor.

The catalysed reaction is [phosphate](n) + GTP = [phosphate](n+1) + GDP. Its function is as follows. Uses inorganic polyphosphate (polyP) as a donor to convert GDP to GTP. In addition, modulates nucleotide triphosphate synthesis catalyzed by the nucleoside diphosphate kinase (Ndk) in favor of GTP production over CTP or UTP. Plays an important role in survival of M.tuberculosis in macrophages. The polypeptide is GDP-polyphosphate phosphotransferase (Mycobacterium tuberculosis (strain ATCC 25618 / H37Rv)).